The sequence spans 732 residues: Ubiquitin carboxyl-terminal hydrolase 21 (732 aa).

Residues 1–10 are compositionally biased toward pro residues; that stretch reads MAEFSDPPPS. Residues 1–111 are disordered; the sequence is MAEFSDPPPS…ISPVSNNNHL (111 aa). Composition is skewed to polar residues over residues 11 to 31 and 38 to 53; these read NLSS…SSPT and VTNS…QIQA. Low complexity predominate over residues 55–69; sequence SPAKPDGSSSSPPDK. The USP domain occupies 163–469; the sequence is AGLYNSGNTC…PAYILFYARE (307 aa). Residue Cys-172 is the Nucleophile of the active site. The Proton acceptor role is filled by His-428. Positions 534–732 are disordered; the sequence is KEEVFHSAES…SSNMRRSIKL (199 aa). Over residues 540–551 the composition is skewed to low complexity; sequence SAESSNNEDSSA. Basic and acidic residues predominate over residues 583–609; sequence AYIDKSEKPFAETSQPKEPKPFADRAS. The segment covering 719-732 has biased composition (basic residues); that stretch reads KKKKSSNMRRSIKL.

Belongs to the peptidase C19 family.

It catalyses the reaction Thiol-dependent hydrolysis of ester, thioester, amide, peptide and isopeptide bonds formed by the C-terminal Gly of ubiquitin (a 76-residue protein attached to proteins as an intracellular targeting signal).. Its function is as follows. Recognizes and hydrolyzes the peptide bond at the C-terminal Gly of ubiquitin. Involved in the processing of poly-ubiquitin precursors as well as that of ubiquitinated proteins. In Arabidopsis thaliana (Mouse-ear cress), this protein is Ubiquitin carboxyl-terminal hydrolase 21 (UBP21).